We begin with the raw amino-acid sequence, 131 residues long: Profilin-1 (131 aa).

It belongs to the profilin family. In terms of assembly, occurs in many kinds of cells as a complex with monomeric actin in a 1:1 ratio.

It is found in the cytoplasm. It localises to the cytoskeleton. Its function is as follows. Binds to actin and affects the structure of the cytoskeleton. At high concentrations, profilin prevents the polymerization of actin, whereas it enhances it at low concentrations. By binding to PIP2, it inhibits the formation of IP3 and DG. In Ricinus communis (Castor bean), this protein is Profilin-1 (PRO1).